Here is a 287-residue protein sequence, read N- to C-terminus: ATP synthase gamma chain (287 aa).

The protein belongs to the ATPase gamma chain family. F-type ATPases have 2 components, CF(1) - the catalytic core - and CF(0) - the membrane proton channel. CF(1) has five subunits: alpha(3), beta(3), gamma(1), delta(1), epsilon(1). CF(0) has three main subunits: a, b and c.

The protein localises to the cell inner membrane. Functionally, produces ATP from ADP in the presence of a proton gradient across the membrane. The gamma chain is believed to be important in regulating ATPase activity and the flow of protons through the CF(0) complex. The chain is ATP synthase gamma chain from Pectobacterium carotovorum subsp. carotovorum (strain PC1).